The following is a 289-amino-acid chain: Protease HtpX homolog (289 aa).

Helical transmembrane passes span 11–31 (AALF…IGAG) and 36–54 (APIW…YGYW). Position 138 (His138) interacts with Zn(2+). Glu139 is a catalytic residue. His142 is a binding site for Zn(2+). The next 2 membrane-spanning stretches (helical) occupy residues 153–173 (VAAA…FFGG) and 182–202 (LAMI…QMAI). Glu207 is a Zn(2+) binding site.

This sequence belongs to the peptidase M48B family. It depends on Zn(2+) as a cofactor.

It localises to the cell membrane. In Pseudarthrobacter chlorophenolicus (strain ATCC 700700 / DSM 12829 / CIP 107037 / JCM 12360 / KCTC 9906 / NCIMB 13794 / A6) (Arthrobacter chlorophenolicus), this protein is Protease HtpX homolog.